The primary structure comprises 369 residues: Flagellar P-ring protein 2 (369 aa).

The first 24 residues, 1-24 (MCAFAAILSLLSVLLMATSRSSDA), serve as a signal peptide directing secretion.

It belongs to the FlgI family. The basal body constitutes a major portion of the flagellar organelle and consists of four rings (L,P,S, and M) mounted on a central rod.

It localises to the periplasm. It is found in the bacterial flagellum basal body. Assembles around the rod to form the L-ring and probably protects the motor/basal body from shearing forces during rotation. This is Flagellar P-ring protein 2 from Burkholderia thailandensis (strain ATCC 700388 / DSM 13276 / CCUG 48851 / CIP 106301 / E264).